The primary structure comprises 294 residues: MSLFDWFADRRKGQFVGKVTQESEESDGLWEKCPECGQVVYRKDLIDNCSVCSNCGHHNRIDSKERIRLISDPNTFKSINNHLTPVDPLGFKDRRAYADRLRESQAGTGLKDGVLTGTCEVNSIPMALAVMDFRFMGGSMGSVVGEKITRLIEHSTKEKLPLLIVCASGGARMQEGMLSLMQMAKISGALERHRDAQLLYMPLLTHPTTGGVTASFAMLGDLILAEPKALIGFAGRRVIEQTLREKLPDNFQTAEYLQDHGFVDTIVPRTELKETLAKILRLHKTQVVKLQTNA.

One can recognise a CoA carboxyltransferase N-terminal domain in the interval 29–294 (LWEKCPECGQ…TQVVKLQTNA (266 aa)). 4 residues coordinate Zn(2+): C33, C36, C52, and C55. Residues 33 to 55 (CPECGQVVYRKDLIDNCSVCSNC) form a C4-type zinc finger.

This sequence belongs to the AccD/PCCB family. As to quaternary structure, acetyl-CoA carboxylase is a heterohexamer composed of biotin carboxyl carrier protein (AccB), biotin carboxylase (AccC) and two subunits each of ACCase subunit alpha (AccA) and ACCase subunit beta (AccD). Requires Zn(2+) as cofactor.

It localises to the cytoplasm. The enzyme catalyses N(6)-carboxybiotinyl-L-lysyl-[protein] + acetyl-CoA = N(6)-biotinyl-L-lysyl-[protein] + malonyl-CoA. It participates in lipid metabolism; malonyl-CoA biosynthesis; malonyl-CoA from acetyl-CoA: step 1/1. Component of the acetyl coenzyme A carboxylase (ACC) complex. Biotin carboxylase (BC) catalyzes the carboxylation of biotin on its carrier protein (BCCP) and then the CO(2) group is transferred by the transcarboxylase to acetyl-CoA to form malonyl-CoA. The chain is Acetyl-coenzyme A carboxylase carboxyl transferase subunit beta from Prochlorococcus marinus (strain NATL2A).